We begin with the raw amino-acid sequence, 323 residues long: Pantothenate kinase (323 aa).

Polar residues predominate over residues 1-12 (MAEQNAASTTGV). The segment at 1–24 (MAEQNAASTTGVKPSPRTPDFSPY) is disordered. Residue 108 to 115 (GSVAVGKS) participates in ATP binding.

The protein belongs to the prokaryotic pantothenate kinase family.

It localises to the cytoplasm. It catalyses the reaction (R)-pantothenate + ATP = (R)-4'-phosphopantothenate + ADP + H(+). It participates in cofactor biosynthesis; coenzyme A biosynthesis; CoA from (R)-pantothenate: step 1/5. In Corynebacterium glutamicum (strain R), this protein is Pantothenate kinase.